The sequence spans 448 residues: Phosphoglucosamine mutase (448 aa).

Catalysis depends on Ser-100, which acts as the Phosphoserine intermediate. Residues Ser-100, Asp-240, Asp-242, and Asp-244 each coordinate Mg(2+). The residue at position 100 (Ser-100) is a Phosphoserine.

The protein belongs to the phosphohexose mutase family. The cofactor is Mg(2+). Activated by phosphorylation.

It carries out the reaction alpha-D-glucosamine 1-phosphate = D-glucosamine 6-phosphate. Functionally, catalyzes the conversion of glucosamine-6-phosphate to glucosamine-1-phosphate. This Bacillus cytotoxicus (strain DSM 22905 / CIP 110041 / 391-98 / NVH 391-98) protein is Phosphoglucosamine mutase.